The sequence spans 717 residues: Glycine--tRNA ligase beta subunit (717 aa).

The protein belongs to the class-II aminoacyl-tRNA synthetase family. Tetramer of two alpha and two beta subunits.

The protein resides in the cytoplasm. The enzyme catalyses tRNA(Gly) + glycine + ATP = glycyl-tRNA(Gly) + AMP + diphosphate. The protein is Glycine--tRNA ligase beta subunit of Agrobacterium fabrum (strain C58 / ATCC 33970) (Agrobacterium tumefaciens (strain C58)).